The chain runs to 229 residues: (S)-2-haloacid dehalogenase 2 (229 aa).

The active-site Nucleophile is the Asp-10. An (S)-2-haloacid-binding positions include 11–12 (LY), Arg-41, and 118–119 (SN). The segment at 175–180 (SSNAWD) is important for catalytic activity.

It belongs to the HAD-like hydrolase superfamily. S-2-haloalkanoic acid dehalogenase family.

The catalysed reaction is an (S)-2-haloacid + H2O = a (2R)-2-hydroxycarboxylate + a halide anion + H(+). It carries out the reaction (S)-2-chloropropanoate + H2O = (R)-lactate + chloride + H(+). Its function is as follows. Catalyzes the hydrolytic dehalogenation of small (S)-2-haloalkanoic acids to yield the corresponding (R)-2-hydroxyalkanoic acids. Acts on acids of short chain lengths, C(2) to C(4), with inversion of configuration at C-2. Active with 2-halogenated carboxylic acids and converts only the S-isomer (or L-isomer) of 2-chloropropionic acid with inversion of configuration to produce R-lactate (or D-isomer). The sequence is that of (S)-2-haloacid dehalogenase 2 from Pseudomonas sp. (strain CBS-3).